The following is a 287-amino-acid chain: Inactive phospholipid phosphatase 7 (287 aa).

Residues 1-75 (MPANQTRSRA…NNKDKKELPE (75 aa)) are disordered. The Cytoplasmic segment spans residues 1 to 120 (MPANQTRSRA…SSSWGSVRSM (120 aa)). The span at 31 to 40 (SGGGGGGGES) shows a compositional bias: gly residues. Positions 49–65 (QRQQQNQQQQGDNPQPE) are enriched in low complexity. A helical membrane pass occupies residues 121-141 (VKLLALTGHGIPWVFGTIVCL). Residues 142 to 146 (MRSNT) lie on the Extracellular side of the membrane. Residues 147-167 (LAGQEVLVNLLLALLLDVMTV) form a helical membrane-spanning segment. Residues 168 to 215 (SGMQKLVKRKGPWEMPPGFFDYLAMDIYSFPAAHASRAVMVSKFLLAH) lie on the Cytoplasmic side of the membrane. A helical membrane pass occupies residues 216–236 (LVLAVPLRILLVLWAILVGIS). Residues 237-247 (RVLLGRHHLTD) are Extracellular-facing. Residues 248–268 (VGCGFALGFLHYSLVEMVWLS) traverse the membrane as a helical segment. Residues 269-287 (SNTCQTLISIGTFNWSPLY) lie on the Cytoplasmic side of the membrane.

This sequence belongs to the PA-phosphatase related phosphoesterase family.

The protein resides in the nucleus envelope. The protein localises to the endoplasmic reticulum membrane. Its subcellular location is the membrane. Its function is as follows. Plays a role as negative regulator of myoblast differentiation, in part through effects on MTOR signaling. Has no detectable enzymatic activity. This is Inactive phospholipid phosphatase 7 from Danio rerio (Zebrafish).